We begin with the raw amino-acid sequence, 128 residues long: Ribosome-binding factor A (128 aa).

Belongs to the RbfA family. As to quaternary structure, monomer. Binds 30S ribosomal subunits, but not 50S ribosomal subunits or 70S ribosomes.

It is found in the cytoplasm. In terms of biological role, one of several proteins that assist in the late maturation steps of the functional core of the 30S ribosomal subunit. Associates with free 30S ribosomal subunits (but not with 30S subunits that are part of 70S ribosomes or polysomes). Required for efficient processing of 16S rRNA. May interact with the 5'-terminal helix region of 16S rRNA. This is Ribosome-binding factor A from Acidithiobacillus ferrooxidans (strain ATCC 23270 / DSM 14882 / CIP 104768 / NCIMB 8455) (Ferrobacillus ferrooxidans (strain ATCC 23270)).